The chain runs to 904 residues: Toll-like receptor 3 (904 aa).

An N-terminal signal peptide occupies residues methionine 1 to alanine 26. One can recognise an LRRNT domain in the interval histidine 27–threonine 52. Topologically, residues histidine 27 to leucine 705 are lumenal. Cysteine 29 and cysteine 38 form a disulfide bridge. Asparagine 53, asparagine 58, and asparagine 71 each carry an N-linked (GlcNAc...) asparagine glycan. LRR repeat units follow at residues asparagine 53–arginine 74, arginine 77–asparagine 98, tryptophan 101–phenylalanine 122, asparagine 125–asparagine 146, asparagine 149–glutamine 170, and asparagine 173–glycine 196. Cysteine 96 and cysteine 123 form a disulfide bridge. A glycan (N-linked (GlcNAc...) asparagine) is linked at asparagine 125. The N-linked (GlcNAc...) asparagine glycan is linked to asparagine 197. LRR repeat units lie at residues serine 199–alanine 220 and lysine 223–glutamate 245. Asparagine 248, asparagine 253, asparagine 276, and asparagine 292 each carry an N-linked (GlcNAc...) asparagine glycan. LRR repeat units follow at residues serine 250 to glycine 271, asparagine 276 to tryptophan 297, histidine 300 to glycine 321, asparagine 324 to proline 345, cysteine 357 to glycine 378, arginine 381 to threonine 401, proline 409 to tryptophan 430, histidine 433 to glycine 455, tyrosine 466 to methionine 487, asparagine 508 to glycine 529, lysine 532 to glycine 553, histidine 564 to aspartate 585, glutamate 588 to asparagine 609, and serine 612 to proline 633. Residues asparagine 399 and asparagine 414 are each glycosylated (N-linked (GlcNAc...) asparagine). N-linked (GlcNAc...) asparagine glycans are attached at residues asparagine 637, asparagine 663, and asparagine 668. The 54-residue stretch at asparagine 646 to aspartate 699 folds into the LRRCT domain. Cystine bridges form between cysteine 650/cysteine 678 and cysteine 652/cysteine 697. The helical transmembrane segment at leucine 706–phenylalanine 726 threads the bilayer. Topologically, residues glutamate 727–histidine 904 are cytoplasmic. The TIR domain maps to phenylalanine 754–leucine 897. Tyrosine 759 carries the phosphotyrosine modification. Glycyl lysine isopeptide (Lys-Gly) (interchain with G-Cter in ubiquitin) cross-links involve residues lysine 812 and lysine 831. A Phosphotyrosine modification is found at tyrosine 858.

This sequence belongs to the Toll-like receptor family. As to quaternary structure, monomer and homodimer; dimerization is triggered by ligand-binding and is required for TLR3 signaling. Interacts (via transmembrane domain) with UNC93B1. Interacts with TICAM1 (via the TIR domain) in response to poly(I:C) and this interaction is enhanced the presence of WDFY1. Interacts with SRC; upon binding of double-stranded RNA. The tyrosine-phosphorylated form (via TIR domain) interacts with WDFY1 (via WD repeat 2) in response to poly(I:C). Post-translationally, ubiquitinated by TRIM3; leading to recognition and sorting of polyubiquitinated TLR3 by the ESCRT complexes. Ubiquitinated by ZNRF1 via 'Lys-63'-linked ubiquitin chains; leading to TLR3 lysosomal trafficking and degradation.

It localises to the endoplasmic reticulum membrane. The protein localises to the endosome membrane. The protein resides in the early endosome. Functionally, key component of innate and adaptive immunity. TLRs (Toll-like receptors) control host immune response against pathogens through recognition of molecular patterns specific to microorganisms. TLR3 is a nucleotide-sensing TLR which is activated by double-stranded RNA, a sign of viral infection. Acts via the adapter TRIF/TICAM1, leading to NF-kappa-B activation, cytokine secretion and the inflammatory response. This chain is Toll-like receptor 3 (TLR3), found in Boselaphus tragocamelus (Nilgai).